The primary structure comprises 845 residues: Synaptonemal complex protein 1 (845 aa).

The interaction with SYCE3 stretch occupies residues 59–215 (ETRQVYVDLN…YQLTEEKEAQ (157 aa)). 2 coiled-coil regions span residues 64 to 211 (YVDL…LTEE) and 244 to 544 (LRTE…EIEV). The segment at 550 to 644 (EKLLGEVEKA…VSLKKQLEIE (95 aa)) is required for pH-induced assembly of C-terminal ends into antiparallel tetramers. Residues 553-556 (LGEV) carry the Nuclear localization signal motif. Residues 620-663 (KTALETELSNIRNELVSLKKQLEIEREEKEKLKLEKENTAILKD) adopt a coiled-coil conformation. Residues 657–845 (NTAILKDKKD…RLKEAEKLFA (189 aa)) form a DNA-binding region. Phosphoserine is present on serine 676. Over residues 684–703 (FDSKTTPSQNISRISSSMES) the composition is skewed to polar residues. The interval 684-709 (FDSKTTPSQNISRISSSMESGKTKDN) is disordered. The short motif at 753–756 (KKRK) is the Nuclear localization signal element. Residues 786 to 808 (LYNNNSPNSHLTPKQTPLSLSTP) are disordered.

As to quaternary structure, structural component of synaptonemal complexes. Homotetramer that consists of an N-terminal four-helical bundle that bifurcates into two elongated C-terminal dimeric coiled coils. This tetrameric building block potentially self-assembles into a supramolecular zipper-like lattice to mediate meiotic chromosome synapsis. Self-assembly is likely initiated by local proton density at chromosome axis, which is predicted to trigger antiparallel back to back assembly of adjacent C-terminal ends into tetrameric structures that anchor to chromosomal DNA. Then the N-terminal ends are predicted to undergo cooperative antiparallel head to head assembly at the midline of synaptonemal complexes central element to form a zipper-like lattice between properly aligned homologous chromosomes. The nascent synapsis generated by SYCP1 is stabilized through interaction with central element proteins SYCE1 and SYCE2. Interacts (via tetrameric core) with SYCE3; the interaction remodels SYCP1 homotetramers to 2:1 heterotrimers with SYCE3. SYCP1/SYCE3 heterotrimers form lattice assemblies as part of the mature synaptonemal complex via both lateral and head-to-head interactions. Forms a complex with EWSR1, PRDM9, SYCP3 and REC8; complex formation is dependent of phosphorylated form of REC8 and requires PRDM9 bound to hotspot DNA; EWSR1 joins PRDM9 with the chromosomal axis through REC8. Interacts with SPO16.

Its subcellular location is the nucleus. The protein resides in the chromosome. It localises to the centromere. Major component of the transverse filaments of synaptonemal complexes, formed between homologous chromosomes during meiotic prophase. Required for normal assembly of the central element of the synaptonemal complexes. Required for normal centromere pairing during meiosis. Required for normal meiotic chromosome synapsis during oocyte and spermatocyte development and for normal male and female fertility. In Mesocricetus auratus (Golden hamster), this protein is Synaptonemal complex protein 1.